A 269-amino-acid chain; its full sequence is Hydroxypyruvate/pyruvate aldolase (269 aa).

Catalysis depends on His-47, which acts as the Proton acceptor. Residues Glu-151 and Asp-177 each coordinate a divalent metal cation.

Belongs to the HpcH/HpaI aldolase family. A divalent metal cation serves as cofactor.

The catalysed reaction is D-glyceraldehyde + 3-hydroxypyruvate = 2-dehydro-D-gluconate. It carries out the reaction D-glyceraldehyde + 3-hydroxypyruvate = (3R,4S,5R)-3,4,5,6-tetrahydroxy-2-oxohexanoate. The enzyme catalyses D-glyceraldehyde + 3-hydroxypyruvate = 2-dehydro-D-galactonate. It catalyses the reaction D-glyceraldehyde + pyruvate = 2-dehydro-3-deoxy-L-galactonate. The catalysed reaction is 2-dehydro-3-deoxy-D-gluconate = D-glyceraldehyde + pyruvate. In terms of biological role, aldolase which can catalyze in vitro the aldolisation reaction between hydroxypyruvate (HPA) or pyruvate (PA) and D-glyceraldehyde (D-GA). The condensation of hydroxypyruvate and D-glyceraldehyde produces 2-dehydro-D-gluconate as the major product, (3R,4S,5R)-3,4,5,6-tetrahydroxy-2-oxohexanoate and 2-dehydro-D-galactonate. The condensation of pyruvate and D-glyceraldehyde produces 2-dehydro-3-deoxy-L-galactonate as the major product and 2-dehydro-3-deoxy-D-gluconate. The protein is Hydroxypyruvate/pyruvate aldolase of Cupriavidus necator (strain ATCC 17699 / DSM 428 / KCTC 22496 / NCIMB 10442 / H16 / Stanier 337) (Ralstonia eutropha).